The sequence spans 265 residues: 4-hydroxy-tetrahydrodipicolinate reductase (265 aa).

9–14 contributes to the NAD(+) binding site; sequence GARGKM. Residue lysine 37 participates in NADP(+) binding. NAD(+) is bound by residues 99 to 101 and 125 to 128; these read GTT and APNF. Histidine 155 functions as the Proton donor/acceptor in the catalytic mechanism. Histidine 156 serves as a coordination point for (S)-2,3,4,5-tetrahydrodipicolinate. Catalysis depends on lysine 159, which acts as the Proton donor. Residue 165–166 participates in (S)-2,3,4,5-tetrahydrodipicolinate binding; the sequence is GT.

It belongs to the DapB family.

The protein resides in the cytoplasm. It catalyses the reaction (S)-2,3,4,5-tetrahydrodipicolinate + NAD(+) + H2O = (2S,4S)-4-hydroxy-2,3,4,5-tetrahydrodipicolinate + NADH + H(+). The catalysed reaction is (S)-2,3,4,5-tetrahydrodipicolinate + NADP(+) + H2O = (2S,4S)-4-hydroxy-2,3,4,5-tetrahydrodipicolinate + NADPH + H(+). Its pathway is amino-acid biosynthesis; L-lysine biosynthesis via DAP pathway; (S)-tetrahydrodipicolinate from L-aspartate: step 4/4. Catalyzes the conversion of 4-hydroxy-tetrahydrodipicolinate (HTPA) to tetrahydrodipicolinate. The chain is 4-hydroxy-tetrahydrodipicolinate reductase from Lysinibacillus sphaericus (strain C3-41).